A 183-amino-acid polypeptide reads, in one-letter code: Glutathione-regulated potassium-efflux system ancillary protein KefG (183 aa).

This sequence belongs to the NAD(P)H dehydrogenase (quinone) family. KefG subfamily. Interacts with KefB.

It is found in the cell inner membrane. The catalysed reaction is a quinone + NADH + H(+) = a quinol + NAD(+). It carries out the reaction a quinone + NADPH + H(+) = a quinol + NADP(+). Regulatory subunit of a potassium efflux system that confers protection against electrophiles. Required for full activity of KefB. The sequence is that of Glutathione-regulated potassium-efflux system ancillary protein KefG from Salmonella paratyphi B (strain ATCC BAA-1250 / SPB7).